Consider the following 416-residue polypeptide: UDP-N-acetylglucosamine 1-carboxyvinyltransferase (416 aa).

22 to 23 contacts phosphoenolpyruvate; it reads KN. UDP-N-acetyl-alpha-D-glucosamine is bound at residue arginine 91. The active-site Proton donor is cysteine 115. Position 115 is a 2-(S-cysteinyl)pyruvic acid O-phosphothioketal (cysteine 115). UDP-N-acetyl-alpha-D-glucosamine-binding residues include aspartate 304 and isoleucine 326.

Belongs to the EPSP synthase family. MurA subfamily.

The protein localises to the cytoplasm. It carries out the reaction phosphoenolpyruvate + UDP-N-acetyl-alpha-D-glucosamine = UDP-N-acetyl-3-O-(1-carboxyvinyl)-alpha-D-glucosamine + phosphate. It participates in cell wall biogenesis; peptidoglycan biosynthesis. Cell wall formation. Adds enolpyruvyl to UDP-N-acetylglucosamine. This Thermodesulfovibrio yellowstonii (strain ATCC 51303 / DSM 11347 / YP87) protein is UDP-N-acetylglucosamine 1-carboxyvinyltransferase.